Reading from the N-terminus, the 101-residue chain is UPF0235 protein Mevan_0378 (101 aa).

It belongs to the UPF0235 family.

The polypeptide is UPF0235 protein Mevan_0378 (Methanococcus vannielii (strain ATCC 35089 / DSM 1224 / JCM 13029 / OCM 148 / SB)).